A 173-amino-acid chain; its full sequence is NADH-quinone oxidoreductase subunit B 2 (173 aa).

Residues C42, C43, C107, and C137 each contribute to the [4Fe-4S] cluster site.

This sequence belongs to the complex I 20 kDa subunit family. As to quaternary structure, NDH-1 is composed of 14 different subunits. Subunits NuoB, C, D, E, F, and G constitute the peripheral sector of the complex. [4Fe-4S] cluster serves as cofactor.

Its subcellular location is the cell inner membrane. The enzyme catalyses a quinone + NADH + 5 H(+)(in) = a quinol + NAD(+) + 4 H(+)(out). NDH-1 shuttles electrons from NADH, via FMN and iron-sulfur (Fe-S) centers, to quinones in the respiratory chain. Couples the redox reaction to proton translocation (for every two electrons transferred, four hydrogen ions are translocated across the cytoplasmic membrane), and thus conserves the redox energy in a proton gradient. This is NADH-quinone oxidoreductase subunit B 2 from Anaeromyxobacter dehalogenans (strain 2CP-C).